The sequence spans 675 residues: PTS system glucose-specific EIICBA component (675 aa).

A PTS EIIC type-1 domain is found at 3–414 (KKLFGQLQRI…FNFKTPGRED (412 aa)). Transmembrane regions (helical) follow at residues 16 to 36 (LMLP…GTAF), 59 to 79 (MMTG…ALGV), 81 to 101 (IGLA…FIIM), 126 to 146 (VLGI…GALA), 173 to 193 (IMMA…WPFI), 199 to 219 (AFST…FGFI), 273 to 293 (FMQG…LAIY), 303 to 323 (VVGG…ITEP), 328 to 348 (FLFV…LSFL), 355 to 375 (LHLG…GILP), and 378 to 398 (TPWW…YVVF). One can recognise a PTS EIIB type-1 domain in the interval 425–506 (SKLPFDVLDA…ARIMNGDITK (82 aa)). Residue Cys-447 is the Phosphocysteine intermediate; for EIIB activity of the active site. A PTS EIIA type-1 domain is found at 547 to 651 (DKVFSEKMMG…SVVTPVIITN (105 aa)). The Tele-phosphohistidine intermediate; for EIIA activity role is filled by His-599.

The protein resides in the cell membrane. It carries out the reaction N(pros)-phospho-L-histidyl-[protein] + D-glucose(out) = D-glucose 6-phosphate(in) + L-histidyl-[protein]. Its function is as follows. The phosphoenolpyruvate-dependent sugar phosphotransferase system (sugar PTS), a major carbohydrate active transport system, catalyzes the phosphorylation of incoming sugar substrates concomitantly with their translocation across the cell membrane. This system is involved in glucose transport. This chain is PTS system glucose-specific EIICBA component (ptsG), found in Staphylococcus haemolyticus (strain JCSC1435).